Reading from the N-terminus, the 264-residue chain is S-adenosylmethionine decarboxylase proenzyme (264 aa).

S111 functions as the Schiff-base intermediate with substrate; via pyruvic acid in the catalytic mechanism. S111 bears the Pyruvic acid (Ser); by autocatalysis mark. The Proton acceptor; for processing activity role is filled by H116. The active-site Proton donor; for catalytic activity is the C139.

This sequence belongs to the prokaryotic AdoMetDC family. Type 2 subfamily. Heterooctamer of four alpha and four beta chains arranged as a tetramer of alpha/beta heterodimers. The cofactor is pyruvate. Post-translationally, is synthesized initially as an inactive proenzyme. Formation of the active enzyme involves a self-maturation process in which the active site pyruvoyl group is generated from an internal serine residue via an autocatalytic post-translational modification. Two non-identical subunits are generated from the proenzyme in this reaction, and the pyruvate is formed at the N-terminus of the alpha chain, which is derived from the carboxyl end of the proenzyme. The post-translation cleavage follows an unusual pathway, termed non-hydrolytic serinolysis, in which the side chain hydroxyl group of the serine supplies its oxygen atom to form the C-terminus of the beta chain, while the remainder of the serine residue undergoes an oxidative deamination to produce ammonia and the pyruvoyl group blocking the N-terminus of the alpha chain.

The catalysed reaction is S-adenosyl-L-methionine + H(+) = S-adenosyl 3-(methylsulfanyl)propylamine + CO2. The protein operates within amine and polyamine biosynthesis; S-adenosylmethioninamine biosynthesis; S-adenosylmethioninamine from S-adenosyl-L-methionine: step 1/1. Its function is as follows. Catalyzes the decarboxylation of S-adenosylmethionine to S-adenosylmethioninamine (dcAdoMet), the propylamine donor required for the synthesis of the polyamines spermine and spermidine from the diamine putrescine. This is S-adenosylmethionine decarboxylase proenzyme from Geobacillus thermodenitrificans (strain NG80-2).